Consider the following 284-residue polypeptide: MSYPLHLFWHRRDLRLADNLGLYAARQHTPTVVGVFCFDPALLQGQDVAAVRVAYLLGCLQALKEAYQQRGGCLLMVQGDPRQVIPEVATTLKATAVHWHEDVEPYARERDRVVAATLNDLGIAVHRQWDQLLHPPSAVQTQQGQPYTVYTPFWRNWSALPKAAPVPPPPDFAPLEATEIASIPLPSTHDLGFDWSGELILAPGEAAAAQQLAHFSQHAIYEYGEQRNYPGRPGTALLSPALKFGVIGIRTVWAASEAALEHARSDEARASIRTWQQELAWREF.

In terms of domain architecture, Photolyase/cryptochrome alpha/beta spans 4–133 (PLHLFWHRRD…AVHRQWDQLL (130 aa)).

This is an uncharacterized protein from Synechococcus sp. (strain PCC 6716).